The primary structure comprises 98 residues: UPF0251 protein Sputcn32_0687 (98 aa).

Belongs to the UPF0251 family.

The sequence is that of UPF0251 protein Sputcn32_0687 from Shewanella putrefaciens (strain CN-32 / ATCC BAA-453).